The primary structure comprises 566 residues: Proline--tRNA ligase (566 aa).

The protein belongs to the class-II aminoacyl-tRNA synthetase family. ProS type 1 subfamily. Homodimer.

The protein localises to the cytoplasm. The catalysed reaction is tRNA(Pro) + L-proline + ATP = L-prolyl-tRNA(Pro) + AMP + diphosphate. Functionally, catalyzes the attachment of proline to tRNA(Pro) in a two-step reaction: proline is first activated by ATP to form Pro-AMP and then transferred to the acceptor end of tRNA(Pro). As ProRS can inadvertently accommodate and process non-cognate amino acids such as alanine and cysteine, to avoid such errors it has two additional distinct editing activities against alanine. One activity is designated as 'pretransfer' editing and involves the tRNA(Pro)-independent hydrolysis of activated Ala-AMP. The other activity is designated 'posttransfer' editing and involves deacylation of mischarged Ala-tRNA(Pro). The misacylated Cys-tRNA(Pro) is not edited by ProRS. This is Proline--tRNA ligase from Bacillus mycoides (strain KBAB4) (Bacillus weihenstephanensis).